A 250-amino-acid chain; its full sequence is 1-(5-phosphoribosyl)-5-[(5-phosphoribosylamino)methylideneamino] imidazole-4-carboxamide isomerase (250 aa).

The active-site Proton acceptor is the D8. D131 (proton donor) is an active-site residue.

It belongs to the HisA/HisF family.

The protein resides in the cytoplasm. The enzyme catalyses 1-(5-phospho-beta-D-ribosyl)-5-[(5-phospho-beta-D-ribosylamino)methylideneamino]imidazole-4-carboxamide = 5-[(5-phospho-1-deoxy-D-ribulos-1-ylimino)methylamino]-1-(5-phospho-beta-D-ribosyl)imidazole-4-carboxamide. The protein operates within amino-acid biosynthesis; L-histidine biosynthesis; L-histidine from 5-phospho-alpha-D-ribose 1-diphosphate: step 4/9. In Paraburkholderia xenovorans (strain LB400), this protein is 1-(5-phosphoribosyl)-5-[(5-phosphoribosylamino)methylideneamino] imidazole-4-carboxamide isomerase.